The sequence spans 252 residues: Chitooligosaccharide deacetylase (252 aa).

Mg(2+) contacts are provided by histidine 61 and histidine 125.

This sequence belongs to the YdjC deacetylase family. ChbG subfamily. As to quaternary structure, homodimer. Mg(2+) serves as cofactor.

It is found in the cytoplasm. The enzyme catalyses N,N'-diacetylchitobiose + H2O = N-acetyl-beta-D-glucosaminyl-(1-&gt;4)-D-glucosamine + acetate. The catalysed reaction is diacetylchitobiose-6'-phosphate + H2O = N'-monoacetylchitobiose-6'-phosphate + acetate. Its pathway is glycan degradation; chitin degradation. Involved in the degradation of chitin. ChbG is essential for growth on the acetylated chitooligosaccharides chitobiose and chitotriose but is dispensable for growth on cellobiose and chitosan dimer, the deacetylated form of chitobiose. Deacetylation of chitobiose-6-P and chitotriose-6-P is necessary for both the activation of the chb promoter by the regulatory protein ChbR and the hydrolysis of phosphorylated beta-glucosides by the phospho-beta-glucosidase ChbF. Catalyzes the removal of only one acetyl group from chitobiose-6-P to yield monoacetylchitobiose-6-P, the inducer of ChbR and the substrate of ChbF. This chain is Chitooligosaccharide deacetylase, found in Escherichia coli O6:K15:H31 (strain 536 / UPEC).